A 311-amino-acid polypeptide reads, in one-letter code: Methionyl-tRNA formyltransferase (311 aa).

A (6S)-5,6,7,8-tetrahydrofolate-binding site is contributed by 117–120 (SLLP).

Belongs to the Fmt family.

The enzyme catalyses L-methionyl-tRNA(fMet) + (6R)-10-formyltetrahydrofolate = N-formyl-L-methionyl-tRNA(fMet) + (6S)-5,6,7,8-tetrahydrofolate + H(+). In terms of biological role, attaches a formyl group to the free amino group of methionyl-tRNA(fMet). The formyl group appears to play a dual role in the initiator identity of N-formylmethionyl-tRNA by promoting its recognition by IF2 and preventing the misappropriation of this tRNA by the elongation apparatus. In Bordetella avium (strain 197N), this protein is Methionyl-tRNA formyltransferase.